A 571-amino-acid chain; its full sequence is Urease subunit alpha (571 aa).

The Urease domain maps to 133–571 (GGIDTHIHFV…LPLAQRYFLF (439 aa)). Positions 138, 140, and 221 each coordinate Ni(2+). An N6-carboxylysine modification is found at lysine 221. Histidine 223 serves as a coordination point for substrate. Histidine 250 and histidine 276 together coordinate Ni(2+). Histidine 324 serves as the catalytic Proton donor. Position 364 (aspartate 364) interacts with Ni(2+).

The protein belongs to the metallo-dependent hydrolases superfamily. Urease alpha subunit family. In terms of assembly, heterotrimer of UreA (gamma), UreB (beta) and UreC (alpha) subunits. Three heterotrimers associate to form the active enzyme. Requires Ni cation as cofactor. In terms of processing, carboxylation allows a single lysine to coordinate two nickel ions.

Its subcellular location is the cytoplasm. It carries out the reaction urea + 2 H2O + H(+) = hydrogencarbonate + 2 NH4(+). The protein operates within nitrogen metabolism; urea degradation; CO(2) and NH(3) from urea (urease route): step 1/1. This chain is Urease subunit alpha, found in Anaeromyxobacter sp. (strain K).